Consider the following 375-residue polypeptide: Decapping and exoribonuclease protein Rai1 (375 aa).

Substrate contacts are provided by residues arginine 43 and 120 to 122 (LRG). The Mg(2+) site is built by glutamate 180, glutamate 222, aspartate 224, glutamate 247, and leucine 248. Glutamate 222 is a substrate binding site. Positions 249 and 274 each coordinate substrate.

This sequence belongs to the DXO/Dom3Z family. As to quaternary structure, interacts with Rat1. Requires Mg(2+) as cofactor.

The enzyme catalyses a 5'-end triphospho-ribonucleoside in mRNA + H2O = a 5'-end phospho-ribonucleoside in mRNA + diphosphate + H(+). It carries out the reaction a 5'-end NAD(+)-phospho-ribonucleoside in mRNA + H2O = a 5'-end phospho-ribonucleoside in mRNA + NAD(+) + H(+). The catalysed reaction is a 5'-end (N(7)-methyl 5'-triphosphoguanosine)-ribonucleoside-ribonucleotide in mRNA + H2O = a (N(7)-methyl 5'-triphosphoguanosine)-nucleoside + a 5'-end phospho-ribonucleoside in mRNA + H(+). Its function is as follows. Decapping enzyme for NAD-capped RNAs: specifically hydrolyzes the nicotinamide adenine dinucleotide (NAD) cap from a subset of RNAs by removing the entire NAD moiety from the 5'-end of an NAD-capped RNA. The NAD-cap is present at the 5'-end of some RNAs and snoRNAs. In contrast to the canonical 5'-end N7 methylguanosine (m7G) cap, the NAD cap promotes mRNA decay. Also acts as a non-canonical decapping enzyme that removes the entire cap structure of m7G capped or incompletely capped RNAs and mediates their subsequent degradation. Specifically degrades pre-mRNAs with a defective 5'-end m7G cap and is part of a pre-mRNA capping quality control. Possesses 5'-pyrophosphohydrolase activity, hydrolyzing the 5'-end triphosphate to release pyrophosphates, and 5'-3' exonuclease activity. May be involved in RNA degradation in the nucleus. In Drosophila melanogaster (Fruit fly), this protein is Decapping and exoribonuclease protein Rai1.